The chain runs to 307 residues: HPr kinase/phosphorylase (307 aa).

Residues histidine 136 and lysine 157 contribute to the active site. 151 to 158 is a binding site for ATP; that stretch reads GESGIGKS. Serine 158 is a binding site for Mg(2+). Aspartate 175 acts as the Proton acceptor; for phosphorylation activity. Proton donor; for dephosphorylation activity in catalysis. Residues 198 to 207 are important for the catalytic mechanism of both phosphorylation and dephosphorylation; the sequence is LEVRGMGIID. Residue glutamate 199 participates in Mg(2+) binding. The active site involves arginine 240. The tract at residues 261–266 is important for the catalytic mechanism of dephosphorylation; it reads PIRPGR.

The protein belongs to the HPrK/P family. As to quaternary structure, homohexamer. Requires Mg(2+) as cofactor.

It carries out the reaction [HPr protein]-L-serine + ATP = [HPr protein]-O-phospho-L-serine + ADP + H(+). The enzyme catalyses [HPr protein]-O-phospho-L-serine + phosphate + H(+) = [HPr protein]-L-serine + diphosphate. Functionally, catalyzes the ATP- as well as the pyrophosphate-dependent phosphorylation of a specific serine residue in HPr, a phosphocarrier protein of the phosphoenolpyruvate-dependent sugar phosphotransferase system (PTS). HprK/P also catalyzes the pyrophosphate-producing, inorganic phosphate-dependent dephosphorylation (phosphorolysis) of seryl-phosphorylated HPr (P-Ser-HPr). The two antagonistic activities of HprK/P are regulated by several intracellular metabolites, which change their concentration in response to the absence or presence of rapidly metabolisable carbon sources (glucose, fructose, etc.) in the growth medium. Therefore, by controlling the phosphorylation state of HPr, HPrK/P is a sensor enzyme that plays a major role in the regulation of carbon metabolism and sugar transport: it mediates carbon catabolite repression (CCR), and regulates PTS-catalyzed carbohydrate uptake and inducer exclusion. In Clostridium novyi (strain NT), this protein is HPr kinase/phosphorylase.